A 485-amino-acid polypeptide reads, in one-letter code: MAANTGIIKGNTHEWEMVIGLEVHAQVISNSKLFSGASTGFCSEPNTQVALFDVAMPGTLPVLNARCVEQAVRTSLALSCEVHKYSVFDRKNYFYPDLASGYQITQFYFPIATDGHITLDECCSKDVRISRIHLEQDAGKSMHVGDKTYLDFNRAGVALMEIVSAPDFRSPEEAAEYIKKLRIILRAIGTCDGDMENGSLRCDANVSVRKVGDSNLGARSEIKNLNSIKHLAQAIRHEACRQVEVLESGGVVSQSTMLFDVDTCTTRSMREKEDACDYRYFPDPDLLPLELTTAFIDNIRASLPELPSEKKRRYMQDIGLSRYDADILSSDKDVSAYFESVVAKHAPDLAVPWITGELFGALNKRGSSIADSPVSAGRLVELLDLVADGTISGKMAKQVFALMFETEKSASDIVREQGLCQITSEETLAPIVDRIISESPDEVAEYRQGKTKLLGYFVGKVMKETNGQANPGLVNTLIKRRLAED.

Belongs to the GatB/GatE family. GatB subfamily. In terms of assembly, heterotrimer of A, B and C subunits.

The enzyme catalyses L-glutamyl-tRNA(Gln) + L-glutamine + ATP + H2O = L-glutaminyl-tRNA(Gln) + L-glutamate + ADP + phosphate + H(+). The catalysed reaction is L-aspartyl-tRNA(Asn) + L-glutamine + ATP + H2O = L-asparaginyl-tRNA(Asn) + L-glutamate + ADP + phosphate + 2 H(+). Allows the formation of correctly charged Asn-tRNA(Asn) or Gln-tRNA(Gln) through the transamidation of misacylated Asp-tRNA(Asn) or Glu-tRNA(Gln) in organisms which lack either or both of asparaginyl-tRNA or glutaminyl-tRNA synthetases. The reaction takes place in the presence of glutamine and ATP through an activated phospho-Asp-tRNA(Asn) or phospho-Glu-tRNA(Gln). The chain is Aspartyl/glutamyl-tRNA(Asn/Gln) amidotransferase subunit B from Anaplasma marginale (strain Florida).